Consider the following 362-residue polypeptide: Mitochondrial glycine transporter (362 aa).

3 Solcar repeats span residues 22-108 (PDAT…MRTS), 132-236 (LTAM…FKND), and 269-354 (RSSI…LIKS). The next 6 membrane-spanning stretches (helical) occupy residues 28–53 (LLAGAIAGLVSAVTLQPFDLLKTRLQ), 83–109 (GTLPSTLRTSIGAGLYFTTLSKMRTSW), 138–163 (LTTGFIARGIVGYITMPITIIKTRFE), 211–234 (GSVATLARDCPYAGLYVLTYEAFK), 273–299 (INSTAAVLAASTCTTITAPFDAIKTRL), and 329–347 (GLSLRLGRKGISAGISWCI).

This sequence belongs to the mitochondrial carrier (TC 2.A.29) family. SLC25A38 subfamily.

Its subcellular location is the mitochondrion inner membrane. The enzyme catalyses glycine(in) = glycine(out). In terms of biological role, mitochondrial glycine transporter that imports glycine into the mitochondrial matrix. Plays an important role in providing glycine for the first enzymatic step in heme biosynthesis, the condensation of glycine with succinyl-CoA to produce 5-aminolevulinate (ALA) in the mitochondrial matrix. The polypeptide is Mitochondrial glycine transporter (Candida albicans (strain SC5314 / ATCC MYA-2876) (Yeast)).